We begin with the raw amino-acid sequence, 943 residues long: TBC1 domain family member 2B (943 aa).

Residues 1–29 are disordered; the sequence is MPGVEDPCDSQGTPPEEPSTSVAPGEAAK. Over residues 10-22 the composition is skewed to polar residues; sequence SQGTPPEEPSTSV. In terms of domain architecture, PH spans 32 to 129; that stretch reads SPRLCGYLAK…WLQELQQKRW (98 aa). The stretch at 315–514 forms a coiled coil; that stretch reads RMESDVLLKL…ARYSNLEAKM (200 aa). The 195-residue stretch at 642–836 folds into the Rab-GAP TBC domain; the sequence is GIPHEHRSRM…RIWDSLLYEG (195 aa).

The protein resides in the early endosome. GTPase-activating protein that plays a role in the early steps of endocytosis. The sequence is that of TBC1 domain family member 2B (tbc1d2b) from Xenopus tropicalis (Western clawed frog).